Reading from the N-terminus, the 173-residue chain is Translation initiation factor IF-3 (173 aa).

It belongs to the IF-3 family. Monomer.

The protein localises to the cytoplasm. Functionally, IF-3 binds to the 30S ribosomal subunit and shifts the equilibrium between 70S ribosomes and their 50S and 30S subunits in favor of the free subunits, thus enhancing the availability of 30S subunits on which protein synthesis initiation begins. This Clostridium tetani (strain Massachusetts / E88) protein is Translation initiation factor IF-3.